Reading from the N-terminus, the 289-residue chain is Cyclin-dependent kinase inhibitor 4 (289 aa).

Disordered regions lie at residues Met-1–Ile-31, Leu-56–Ser-160, and Ser-227–Glu-248. Residues Ala-13 to Glu-28 are compositionally biased toward gly residues. Residues Leu-56–Ser-80 are compositionally biased toward low complexity. Residues Cys-134–Leu-144 are compositionally biased toward polar residues.

This sequence belongs to the CDI family. ICK/KRP subfamily. In terms of assembly, specifically interacts with CDKA-1, but not with CDKB1-1. Interacts with CYCD4-1. Binds to FBL17. In terms of tissue distribution, expressed in leaves and flowers and at lower levels in roots.

It localises to the nucleus. Its subcellular location is the nucleoplasm. Its function is as follows. Binds and inhibits CYCD2-1/CDKA-1 complex kinase activity. May target specifically CDKA-1. The sequence is that of Cyclin-dependent kinase inhibitor 4 (KRP4) from Arabidopsis thaliana (Mouse-ear cress).